The chain runs to 179 residues: Ferric nitrobindin-like protein (179 aa).

The GXWXGXG motif lies at 17-23; the sequence is GRWEGLG.

Belongs to the nitrobindin family.

This chain is Ferric nitrobindin-like protein, found in Thermobifida fusca (strain YX).